Consider the following 902-residue polypeptide: Protein translocase subunit SecA (902 aa).

ATP-binding positions include glutamine 87, 105-109 (GEGKT), and aspartate 512. 2 disordered regions span residues 565–584 (RRID…PGSS) and 840–902 (VEEQ…GKLK). Composition is skewed to basic and acidic residues over residues 840-859 (VEEQ…HEDA) and 873-882 (QVREGAKVGR). Cysteine 886, cysteine 888, cysteine 897, and histidine 898 together coordinate Zn(2+). Residues 892–902 (KKYKQCHGKLK) show a composition bias toward basic residues.

This sequence belongs to the SecA family. In terms of assembly, monomer and homodimer. Part of the essential Sec protein translocation apparatus which comprises SecA, SecYEG and auxiliary proteins SecDF-YajC and YidC. Requires Zn(2+) as cofactor.

It is found in the cell inner membrane. The protein resides in the cytoplasm. The catalysed reaction is ATP + H2O + cellular proteinSide 1 = ADP + phosphate + cellular proteinSide 2.. Part of the Sec protein translocase complex. Interacts with the SecYEG preprotein conducting channel. Has a central role in coupling the hydrolysis of ATP to the transfer of proteins into and across the cell membrane, serving both as a receptor for the preprotein-SecB complex and as an ATP-driven molecular motor driving the stepwise translocation of polypeptide chains across the membrane. This Alteromonas mediterranea (strain DSM 17117 / CIP 110805 / LMG 28347 / Deep ecotype) protein is Protein translocase subunit SecA.